The chain runs to 178 residues: Translation machinery-associated protein 16 (178 aa).

It belongs to the TMA16 family.

Its subcellular location is the nucleus. This is Translation machinery-associated protein 16 (TMA16) from Saccharomyces cerevisiae (strain ATCC 204508 / S288c) (Baker's yeast).